Here is a 403-residue protein sequence, read N- to C-terminus: Solanesyl-diphosphate synthase 2, chloroplastic (403 aa).

The transit peptide at 1-62 (MLSVSCPRVY…QPGLAAVDVP (62 aa)) directs the protein to the chloroplast. Positions 123, 126, and 161 each coordinate isopentenyl diphosphate. Mg(2+)-binding residues include D168 and D172. R177 contacts an all-trans-polyprenyl diphosphate. R178 is an isopentenyl diphosphate binding site. Residues K254, T255, Q292, and K309 each contribute to the an all-trans-polyprenyl diphosphate site.

This sequence belongs to the FPP/GGPP synthase family. As to quaternary structure, homodimer. Interacts with FBN5. The cofactor is Mg(2+). Expressed in leaves, stems and roots. Highest expression in leaves and roots.

Its subcellular location is the plastid. It localises to the chloroplast. The catalysed reaction is 7 isopentenyl diphosphate + (2E)-geranyl diphosphate = all-trans-nonaprenyl diphosphate + 7 diphosphate. Its function is as follows. Involved in providing solanesyl diphosphate for plastoquinone-9 (PQ-9) formation. Geranyl diphosphate is the preferred substrate. The protein is Solanesyl-diphosphate synthase 2, chloroplastic of Oryza sativa subsp. japonica (Rice).